The sequence spans 256 residues: 4-oxalocrotonate decarboxylase (256 aa).

It belongs to the hydratase/decarboxylase family. In terms of assembly, forms a complex with AmnF. Mg(2+) is required as a cofactor. Mn(2+) serves as cofactor.

The catalysed reaction is (3E)-2-oxohex-3-enedioate + H(+) = 2-oxopent-4-enoate + CO2. Strongly inhibited by Fe(2+), Fe(3+), K(3)[Fe(CN)(6)], Ag(+) and Cu(2+). In terms of biological role, involved in the modified meta-cleavage pathway for the 2-aminophenol catabolism. The protein is 4-oxalocrotonate decarboxylase (amnE) of Pseudomonas sp.